Consider the following 272-residue polypeptide: 3-methyl-2-oxobutanoate hydroxymethyltransferase (272 aa).

Residues Asp-51 and Asp-90 each contribute to the Mg(2+) site. 3-methyl-2-oxobutanoate contacts are provided by residues 51–52 (DS), Asp-90, and Lys-119. Position 121 (Glu-121) interacts with Mg(2+). Glu-188 serves as the catalytic Proton acceptor.

This sequence belongs to the PanB family. As to quaternary structure, homodecamer; pentamer of dimers. Mg(2+) is required as a cofactor.

It localises to the cytoplasm. The catalysed reaction is 3-methyl-2-oxobutanoate + (6R)-5,10-methylene-5,6,7,8-tetrahydrofolate + H2O = 2-dehydropantoate + (6S)-5,6,7,8-tetrahydrofolate. Its pathway is cofactor biosynthesis; (R)-pantothenate biosynthesis; (R)-pantoate from 3-methyl-2-oxobutanoate: step 1/2. Functionally, catalyzes the reversible reaction in which hydroxymethyl group from 5,10-methylenetetrahydrofolate is transferred onto alpha-ketoisovalerate to form ketopantoate. The protein is 3-methyl-2-oxobutanoate hydroxymethyltransferase of Dechloromonas aromatica (strain RCB).